We begin with the raw amino-acid sequence, 293 residues long: MASLKDLRARIGSVKSTRKITSAMKMVAAAKLRRAQGRAEAARPYAAAMRRMLAELGASVRNEAGLPQLLAGTGKDKVHLLIPMTSDRGLAGAFNANINRTTRDLIRRLQAEGKTIRLLPTGRKGYEFLMREFSDLIVDHVHGSGGKEVPFSAAAELGERLTAMLEKGEFDVCTVVYNRFNNVMSQTPTEMQLIPLAVPANDTVASGERASYEFEPGEEQLLSSLLPRNLQVQLYATMLESAAGEQGARMTAMDNATRNAGKAIDRLTLTYNRTRQTNITNELIEIISGAQAV.

It belongs to the ATPase gamma chain family. As to quaternary structure, F-type ATPases have 2 components, CF(1) - the catalytic core - and CF(0) - the membrane proton channel. CF(1) has five subunits: alpha(3), beta(3), gamma(1), delta(1), epsilon(1). CF(0) has three main subunits: a, b and c.

The protein resides in the cell inner membrane. Produces ATP from ADP in the presence of a proton gradient across the membrane. The gamma chain is believed to be important in regulating ATPase activity and the flow of protons through the CF(0) complex. In Gluconacetobacter diazotrophicus (strain ATCC 49037 / DSM 5601 / CCUG 37298 / CIP 103539 / LMG 7603 / PAl5), this protein is ATP synthase gamma chain.